The following is a 236-amino-acid chain: Auxin-responsive protein IAA13 (236 aa).

3 disordered regions span residues 1–24 (MAGA…GGAA), 52–93 (EAAA…WPPV), and 105–130 (SVKS…GSNS). An EAR-like (transcriptional repression) motif is present at residues 12-16 (LRLGL). The segment covering 52–61 (EAAAGKAEAP) has biased composition (low complexity). Residues 62–81 (AAEKAKRPAEAAAADAEKPP) are compositionally biased toward basic and acidic residues. Over residues 117–130 (QQQQPAANASGSNS) the composition is skewed to low complexity. Residues 131–218 (SAFVKVSMDG…SCKRLRIMKG (88 aa)) enclose the PB1 domain.

This sequence belongs to the Aux/IAA family. In terms of assembly, homodimers and heterodimers.

Its subcellular location is the nucleus. In terms of biological role, aux/IAA proteins are short-lived transcriptional factors that function as repressors of early auxin response genes at low auxin concentrations. This is Auxin-responsive protein IAA13 (IAA13) from Oryza sativa subsp. japonica (Rice).